Here is a 290-residue protein sequence, read N- to C-terminus: Acetyl-coenzyme A carboxylase carboxyl transferase subunit beta (290 aa).

A CoA carboxyltransferase N-terminal domain is found at 28–290 (VMTKCPQCKK…KGGEEGWWRN (263 aa)). Cys-32, Cys-35, Cys-51, and Cys-54 together coordinate Zn(2+). Residues 32–54 (CPQCKKIMYTKELIKNLRVCLSC) form a C4-type zinc finger.

The protein belongs to the AccD/PCCB family. In terms of assembly, acetyl-CoA carboxylase is a heterohexamer composed of biotin carboxyl carrier protein (AccB), biotin carboxylase (AccC) and two subunits each of ACCase subunit alpha (AccA) and ACCase subunit beta (AccD). Requires Zn(2+) as cofactor.

Its subcellular location is the cytoplasm. The catalysed reaction is N(6)-carboxybiotinyl-L-lysyl-[protein] + acetyl-CoA = N(6)-biotinyl-L-lysyl-[protein] + malonyl-CoA. Its pathway is lipid metabolism; malonyl-CoA biosynthesis; malonyl-CoA from acetyl-CoA: step 1/1. Component of the acetyl coenzyme A carboxylase (ACC) complex. Biotin carboxylase (BC) catalyzes the carboxylation of biotin on its carrier protein (BCCP) and then the CO(2) group is transferred by the transcarboxylase to acetyl-CoA to form malonyl-CoA. This is Acetyl-coenzyme A carboxylase carboxyl transferase subunit beta from Geobacillus kaustophilus (strain HTA426).